Here is a 206-residue protein sequence, read N- to C-terminus: Pyridoxine/pyridoxamine 5'-phosphate oxidase (206 aa).

FMN is bound by residues Arg-53–Lys-58, Tyr-68–Thr-69, Lys-75, and Gln-97. Residue Lys-58 coordinates substrate. Residues Tyr-115, Arg-119, and Ser-123 each coordinate substrate. FMN-binding positions include Gln-132–Ser-133 and Trp-177. Residue Arg-183–His-185 participates in substrate binding. Arg-187 provides a ligand contact to FMN.

Belongs to the pyridoxamine 5'-phosphate oxidase family. In terms of assembly, homodimer. It depends on FMN as a cofactor.

The enzyme catalyses pyridoxamine 5'-phosphate + O2 + H2O = pyridoxal 5'-phosphate + H2O2 + NH4(+). It catalyses the reaction pyridoxine 5'-phosphate + O2 = pyridoxal 5'-phosphate + H2O2. It participates in cofactor metabolism; pyridoxal 5'-phosphate salvage; pyridoxal 5'-phosphate from pyridoxamine 5'-phosphate: step 1/1. The protein operates within cofactor metabolism; pyridoxal 5'-phosphate salvage; pyridoxal 5'-phosphate from pyridoxine 5'-phosphate: step 1/1. Catalyzes the oxidation of either pyridoxine 5'-phosphate (PNP) or pyridoxamine 5'-phosphate (PMP) into pyridoxal 5'-phosphate (PLP). This is Pyridoxine/pyridoxamine 5'-phosphate oxidase from Allorhizobium ampelinum (strain ATCC BAA-846 / DSM 112012 / S4) (Agrobacterium vitis (strain S4)).